Reading from the N-terminus, the 395-residue chain is MLQSWEFVLLISCFLCFSSDALQRISLKKMPSIRETLQEMGMKVADVLPSLKHRFSYLDEGLHNKTASTILTNFRDTQYYGEISIGTPAQIFKVVFDTGSSNLWVPSHQCSPLYSACVSHNRYDSSESSTYKPKGTKITLTYGQGYIEGFLSQDIVRVADIPITQFFTEAIALPSIPFMYAHFDGVLGMGYPKQAIGGVIPVFDNIMSEKVLSENVFSVYYSRHSESNTGGEIILGGSDPSHYTGDFHYVSTSREGYWHVDLKGVSIENKIALCHDGCTATIDTGTSFISGPASSISVLMETIGATLSRGDYVIDCNQINLLPDISFHLGDMTYSLSSSTYVLKYSDETECTVAFSAIDIPPPRGPLWLLGATFIKQYYIEFDRQNNRIGFATSF.

An N-terminal signal peptide occupies residues 1–21 (MLQSWEFVLLISCFLCFSSDA). A propeptide spans 22-43 (LQRISLKKMPSIRETLQEMGMK) (activation peptide). Asn64 carries N-linked (GlcNAc...) asparagine glycosylation. The Peptidase A1 domain occupies 79–392 (YYGEISIGTP…DRQNNRIGFA (314 aa)). The active site involves Asp97. Intrachain disulfides connect Cys110–Cys117 and Cys274–Cys278. Asp283 is an active-site residue. A disulfide bridge links Cys316 with Cys351.

It belongs to the peptidase A1 family. N-glycosylated. Expressed by the venom gland (at protein level).

The protein resides in the secreted. The catalysed reaction is Cleavage of Leu-|-Xaa bond in angiotensinogen to generate angiotensin I.. Inhibited completely by aspartyl protease inhibitor pepstatin A, but not by the serine- or metalloproteinase inhibitors PMSF or EDTA. Renin is a highly specific endopeptidase, whose only known function is to generate angiotensin I from angiotensinogen in the plasma, initiating a cascade of reactions that produce an elevation of blood pressure and increased sodium retention by the kidney. This protein is also found in snake venom and shown to specifically cleave human and porcine angiotensinogen into angiotensin I. It does not have general protease activity, no cleavage of alpha or beta casein. May be directly responsible for elevation of blood pressure in the victims of envenomation. In Echis ocellatus (Ocellated saw-scaled viper), this protein is Renin.